The primary structure comprises 816 residues: H(+)/Cl(-) exchange transporter 5 (816 aa).

Residues 1–124 (MAMWQGAMDN…WALIHSVSDA (124 aa)) lie on the Cytoplasmic side of the membrane. 2 consecutive transmembrane segments (helical) span residues 125–162 (FSGW…ICTG) and 208–231 (VNYF…VKVF). The short motif at 237-241 (GSGIP) is the Selectivity filter part_1 element. Ser-238 provides a ligand contact to chloride. Residues 240–247 (IPEIKTIL) constitute an intramembrane region (helical). A run of 2 helical transmembrane segments spans residues 256–275 (LGKW…VSSG) and 281–300 (EGPL…HRFN). The Selectivity filter part_2 motif lies at 279–283 (GKEGP). Intramembrane regions (helical) lie at residues 312–324 (VLSA…VSVA) and 328–336 (PIGGVLFSL). 5 helical membrane-spanning segments follow: residues 348 to 366 (LWRS…RSIN), 389 to 414 (LVPF…IAWC), 422 to 442 (LGKY…ILAF), 498 to 518 (MWQL…TFGM), and 523 to 542 (GLFI…LGVG). Positions 523 to 527 (GLFIP) match the Selectivity filter part_3 motif. Position 525 (Phe-525) interacts with chloride. Residues 570–584 (GLYAMVGAAACLGGV) constitute an intramembrane region (helical). Positions 585-587 (TRM) form an intramembrane region, note=Loop between two helices. Residues 588–599 (TVSLVVIMFELT) constitute an intramembrane region (helical). Positions 600–604 (GGLEY) form an intramembrane region, note=Loop between two helices. A helical transmembrane segment spans residues 605-622 (IVPLMAAAMTSKWVADAL). Residues 623-816 (GREGIYDAHI…NQDPDSILFN (194 aa)) lie on the Cytoplasmic side of the membrane. Tyr-628 provides a ligand contact to chloride. CBS domains follow at residues 656–720 (MKPR…ARKK) and 752–812 (ILDL…DPDS). Residues Thr-666, 687–689 (YSG), and 794–797 (TKKD) each bind ATP.

This sequence belongs to the chloride channel (TC 2.A.49) family. ClC-5/CLCN5 subfamily. In terms of assembly, interacts with NEDD4 and NEDD4L. In terms of processing, ubiquitinated by NEDD4L in the presence of albumin; which promotes endocytosis and proteasomal degradation.

The protein localises to the golgi apparatus membrane. Its subcellular location is the endosome membrane. It is found in the cell membrane. It catalyses the reaction 2 chloride(in) + H(+)(out) = 2 chloride(out) + H(+)(in). Functionally, proton-coupled chloride transporter. Functions as antiport system and exchanges chloride ions against protons. Important for normal acidification of the endosome lumen. May play an important role in renal tubular function. The CLC channel family contains both chloride channels and proton-coupled anion transporters that exchange chloride or another anion for protons. The absence of conserved gating glutamate residues is typical for family members that function as channels. In Oryctolagus cuniculus (Rabbit), this protein is H(+)/Cl(-) exchange transporter 5 (CLCN5).